We begin with the raw amino-acid sequence, 477 residues long: Bifunctional protein HldE (477 aa).

The segment at 1–318 (MKVNLPAFER…ENAVRGRADT (318 aa)) is ribokinase. Position 195 to 198 (195 to 198 (NLSE)) interacts with ATP. Residue D264 is part of the active site. The segment at 344–477 (MTNGVFDILH…IKKIQTESEK (134 aa)) is cytidylyltransferase.

In the N-terminal section; belongs to the carbohydrate kinase PfkB family. It in the C-terminal section; belongs to the cytidylyltransferase family. As to quaternary structure, homodimer.

The enzyme catalyses D-glycero-beta-D-manno-heptose 7-phosphate + ATP = D-glycero-beta-D-manno-heptose 1,7-bisphosphate + ADP + H(+). The catalysed reaction is D-glycero-beta-D-manno-heptose 1-phosphate + ATP + H(+) = ADP-D-glycero-beta-D-manno-heptose + diphosphate. It functions in the pathway nucleotide-sugar biosynthesis; ADP-L-glycero-beta-D-manno-heptose biosynthesis; ADP-L-glycero-beta-D-manno-heptose from D-glycero-beta-D-manno-heptose 7-phosphate: step 1/4. The protein operates within nucleotide-sugar biosynthesis; ADP-L-glycero-beta-D-manno-heptose biosynthesis; ADP-L-glycero-beta-D-manno-heptose from D-glycero-beta-D-manno-heptose 7-phosphate: step 3/4. Catalyzes the phosphorylation of D-glycero-D-manno-heptose 7-phosphate at the C-1 position to selectively form D-glycero-beta-D-manno-heptose-1,7-bisphosphate. Functionally, catalyzes the ADP transfer from ATP to D-glycero-beta-D-manno-heptose 1-phosphate, yielding ADP-D-glycero-beta-D-manno-heptose. This Salmonella enteritidis PT4 (strain P125109) protein is Bifunctional protein HldE.